A 386-amino-acid chain; its full sequence is 1-deoxy-D-xylulose 5-phosphate reductoisomerase (386 aa).

NADPH is bound by residues threonine 10, glycine 11, serine 12, isoleucine 13, glycine 36, asparagine 38, and asparagine 122. Lysine 123 lines the 1-deoxy-D-xylulose 5-phosphate pocket. Glutamate 124 contacts NADPH. Aspartate 148 contributes to the Mn(2+) binding site. Positions 149, 150, 174, and 197 each coordinate 1-deoxy-D-xylulose 5-phosphate. Glutamate 150 serves as a coordination point for Mn(2+). Glycine 203 lines the NADPH pocket. Residues serine 210, asparagine 215, lysine 216, and glutamate 219 each coordinate 1-deoxy-D-xylulose 5-phosphate. Mn(2+) is bound at residue glutamate 219.

The protein belongs to the DXR family. The cofactor is Mg(2+). Mn(2+) serves as cofactor.

The catalysed reaction is 2-C-methyl-D-erythritol 4-phosphate + NADP(+) = 1-deoxy-D-xylulose 5-phosphate + NADPH + H(+). The protein operates within isoprenoid biosynthesis; isopentenyl diphosphate biosynthesis via DXP pathway; isopentenyl diphosphate from 1-deoxy-D-xylulose 5-phosphate: step 1/6. Functionally, catalyzes the NADPH-dependent rearrangement and reduction of 1-deoxy-D-xylulose-5-phosphate (DXP) to 2-C-methyl-D-erythritol 4-phosphate (MEP). The chain is 1-deoxy-D-xylulose 5-phosphate reductoisomerase from Geobacter sulfurreducens (strain ATCC 51573 / DSM 12127 / PCA).